A 506-amino-acid polypeptide reads, in one-letter code: RNA-splicing ligase RtcB homolog (506 aa).

5 residues coordinate Mn(2+): aspartate 120, cysteine 123, histidine 228, histidine 260, and histidine 354. 227–231 (NHYAE) is a binding site for GMP. Residues 354–355 (HN), 403–406 (GGTM), serine 410, 429–432 (HGAG), and lysine 505 contribute to the GMP site. Catalysis depends on histidine 429, which acts as the GMP-histidine intermediate.

The protein belongs to the RtcB family. Catalytic component of the tRNA-splicing ligase complex. Requires Mn(2+) as cofactor.

The enzyme catalyses a 3'-end 3'-phospho-ribonucleotide-RNA + a 5'-end dephospho-ribonucleoside-RNA + GTP = a ribonucleotidyl-ribonucleotide-RNA + GMP + diphosphate. It catalyses the reaction a 3'-end 2',3'-cyclophospho-ribonucleotide-RNA + a 5'-end dephospho-ribonucleoside-RNA + GTP + H2O = a ribonucleotidyl-ribonucleotide-RNA + GMP + diphosphate + H(+). Catalytic subunit of the tRNA-splicing ligase complex that acts by directly joining spliced tRNA halves to mature-sized tRNAs by incorporating the precursor-derived splice junction phosphate into the mature tRNA as a canonical 3',5'-phosphodiester. May act as an RNA ligase with broad substrate specificity, and may function toward other RNAs. In Drosophila melanogaster (Fruit fly), this protein is RNA-splicing ligase RtcB homolog.